A 541-amino-acid chain; its full sequence is Chaperonin GroEL (541 aa).

ATP contacts are provided by residues 29 to 32, 86 to 90, G413, 476 to 478, and D492; these read TLGP, DGTTT, and NAA.

Belongs to the chaperonin (HSP60) family. Forms a cylinder of 14 subunits composed of two heptameric rings stacked back-to-back. Interacts with the co-chaperonin GroES.

The protein localises to the cytoplasm. The catalysed reaction is ATP + H2O + a folded polypeptide = ADP + phosphate + an unfolded polypeptide.. Functionally, together with its co-chaperonin GroES, plays an essential role in assisting protein folding. The GroEL-GroES system forms a nano-cage that allows encapsulation of the non-native substrate proteins and provides a physical environment optimized to promote and accelerate protein folding. This Enterococcus faecalis (strain ATCC 700802 / V583) protein is Chaperonin GroEL.